The sequence spans 216 residues: MAVSAKYDEFNHWWATEGDWVEEPNYRRNGMSGVQCVERNGKKLYVKRMTHHLFHSVRYPFGRPTIVREVAVIKELERAGVIVPKIVFGEAVKIEGEWRALLVTEDMAGFISIADWYAQHAVSPYSDEVRQAMLKAVALAFKKMHSINRQHGCCYVRHIYVKTEGNAEAGFLDLEKSRRRLRRDKAINHDFRQLEKYLEPIPKADWEQVKAYYYAM.

Belongs to the protein kinase superfamily. KdkA/RfaP family.

Its function is as follows. May be an environmental sensor responsive to several stimuli, including internal pH, proton motive force, temperature, and possibly other unknown factors. This is Protein InaA (inaA) from Escherichia coli (strain K12).